A 405-amino-acid polypeptide reads, in one-letter code: Venom serine protease 34 (405 aa).

Residues 1–35 (MIFTNNIAAFQNVVLVKKVKIVLLIFYGSIMFSMT) form the signal peptide. Intrachain disulfides connect C42-C70 and C95-C111. Residues 42-147 (CDYYQNLNLG…EVRPIKRVKD (106 aa)) form the CUB domain. N-linked (GlcNAc...) asparagine glycosylation occurs at N113. The 237-residue stretch at 161–397 (IVGGTNTGIN…YIDWIVSQTP (237 aa)) folds into the Peptidase S1 domain. The cysteines at positions 188 and 204 are disulfide-linked. H203 functions as the Charge relay system in the catalytic mechanism. 2 N-linked (GlcNAc...) asparagine glycosylation sites follow: N209 and N229. D257 acts as the Charge relay system in catalysis. 2 disulfide bridges follow: C323–C336 and C345–C375. S349 (charge relay system) is an active-site residue.

The protein belongs to the peptidase S1 family. As to expression, expressed by the venom duct.

It localises to the secreted. In Apis mellifera (Honeybee), this protein is Venom serine protease 34.